A 298-amino-acid polypeptide reads, in one-letter code: 4-hydroxy-tetrahydrodipicolinate synthase (298 aa).

Pyruvate is bound at residue Thr-48. Catalysis depends on Tyr-137, which acts as the Proton donor/acceptor. The active-site Schiff-base intermediate with substrate is Lys-166. Residue Ile-207 participates in pyruvate binding.

It belongs to the DapA family. As to quaternary structure, homotetramer; dimer of dimers.

It localises to the cytoplasm. It carries out the reaction L-aspartate 4-semialdehyde + pyruvate = (2S,4S)-4-hydroxy-2,3,4,5-tetrahydrodipicolinate + H2O + H(+). It functions in the pathway amino-acid biosynthesis; L-lysine biosynthesis via DAP pathway; (S)-tetrahydrodipicolinate from L-aspartate: step 3/4. In terms of biological role, catalyzes the condensation of (S)-aspartate-beta-semialdehyde [(S)-ASA] and pyruvate to 4-hydroxy-tetrahydrodipicolinate (HTPA). This Campylobacter jejuni subsp. jejuni serotype O:6 (strain 81116 / NCTC 11828) protein is 4-hydroxy-tetrahydrodipicolinate synthase.